We begin with the raw amino-acid sequence, 336 residues long: MEVERVQDISSSSLLTEAIPLEFIRSEKEQPAITTFRGPTPAIPVVDLSDPDEESVRRAVVKASEEWGLFQVVNHGIPTELIRRLQDVGRKFFELPSSEKESVAKPEDSKDIEGYGTKLQKDPEGKKAWVDHLFHRIWPPSCVNYRFWPKNPPEYREVNEEYAVHVKKLSETLLGILSDGLGLKRDALKEGLGGEMAEYMMKINYYPPCPRPDLALGVPAHTDLSGITLLVPNEVPGLQVFKDDHWFDAEYIPSAVIVHIGDQILRLSNGRYKNVLHRTTVDKEKTRMSWPVFLEPPREKIVGPLPELTGDDNPPKFKPFAFKDYSYRKLNKLPLD.

The interval 99–118 (EKESVAKPEDSKDIEGYGTK) is disordered. The Fe2OG dioxygenase domain maps to 196–296 (MAEYMMKINY…RMSWPVFLEP (101 aa)). 2-oxoglutarate is bound at residue 204–206 (NYY). The Fe cation site is built by His-221, Asp-223, and His-277. 287–289 (RMS) provides a ligand contact to 2-oxoglutarate.

This sequence belongs to the iron/ascorbate-dependent oxidoreductase family. The cofactor is L-ascorbate. Requires Fe(2+) as cofactor. Expressed in young seedlings (at protein level). Expressed in roots, emerging leaves, shoot-root transition zone, trichomes, flowers and siliques. In cotyledons, expressed mostly on the adaxial side and only in guard cells on the abaxial side.

The protein resides in the cytoplasm. The protein localises to the nucleus. The enzyme catalyses a (2R,3R)-dihydroflavonol + 2-oxoglutarate + O2 = a flavonol + succinate + CO2 + H2O. It carries out the reaction a (2S)-flavan-4-one + 2-oxoglutarate + O2 = a (2R,3R)-dihydroflavonol + succinate + CO2. It participates in secondary metabolite biosynthesis; flavonoid biosynthesis. Functionally, catalyzes the formation of flavonols from dihydroflavonols. It can act on dihydrokaempferol to produce kaempferol, on dihydroquercetin to produce quercitin and on dihydromyricetin to produce myricetin. In vitro catalyzes the oxidation of both enantiomers of naringenin to give both cis- and trans-dihydrokaempferol. This Arabidopsis thaliana (Mouse-ear cress) protein is Flavonol synthase/flavanone 3-hydroxylase (FLS1).